The primary structure comprises 99 residues: Integration host factor subunit alpha (99 aa).

Residues 49–73 form a disordered region; sequence FGNFDLRDKNQRPGRNPKTGEDIPI.

Belongs to the bacterial histone-like protein family. In terms of assembly, heterodimer of an alpha and a beta chain.

Its function is as follows. This protein is one of the two subunits of integration host factor, a specific DNA-binding protein that functions in genetic recombination as well as in transcriptional and translational control. The polypeptide is Integration host factor subunit alpha (Shigella boydii serotype 18 (strain CDC 3083-94 / BS512)).